The chain runs to 479 residues: MSDTPTRKTDLRVIIVGGSVAGLTLAHCLANANIDHIVLEKRAEISPQEGAFLGIWPNGGRIFDQLGVYADLEKCTVPIHKMRVRFPDGVSFSSELPRQVQERFGYPIISLDRQKVLEILYNRYPAKSNIHVNKKVTEIRQTEREAQVLTADGAVYKGDLVVGADGIHSAVRAEMWRQAKDLVGRRDRQDVNHEIAAFTVEYACVFGISSPISGLESGEHVNSYSNGLCVITFHGKDGRVFWFILIKLQKRFIYPFTPRFSASDAAKICAEYANVPVWGDICVRDLWGNKTSVSMTALEEGLLETWRFKRVVLLGDSIHKMTPNIGQGANTAAEDAGVLASLLQRLSTSDSSATSCTIDAVLQEYASLRYERVKSTYQRAYFGARLHTRDDALKAFVGRYIFPRFRQQVLERTSQAIAGAPQVDFLPTPKRTGPGWSDYAGSPEVGAPTLPWLVISLPVLASMLCYLVYSSVFVTPIFP.

Positions 40, 54, and 113 each coordinate FAD. The active site involves Tyr-224. N-linked (GlcNAc...) asparagine glycosylation occurs at Asn-289. Residues Asp-316 and Ala-329 each coordinate FAD. A helical transmembrane segment spans residues 449–469; it reads TLPWLVISLPVLASMLCYLVY.

The protein belongs to the paxM FAD-dependent monooxygenase family. The cofactor is FAD.

It is found in the membrane. The protein operates within secondary metabolite biosynthesis; terpenoid biosynthesis. FAD-dependent monooxygenase; part of the gene cluster B that mediates the biosynthesis of austinol and dehydroaustinol, two fungal meroterpenoids. The first step of the pathway is the synthesis of 3,5-dimethylorsellinic acid by the polyketide synthase ausA. 3,5-dimethylorsellinic acid is then prenylated by the polyprenyl transferase ausN. Further epoxidation by the FAD-dependent monooxygenase ausM and cyclization by the probable terpene cyclase ausL lead to the formation of protoaustinoid A. Protoaustinoid A is then oxidized to spiro-lactone preaustinoid A3 by the combined action of the FAD-binding monooxygenases ausB and ausC, and the dioxygenase ausE. Acid-catalyzed keto-rearrangement and ring contraction of the tetraketide portion of preaustinoid A3 by ausJ lead to the formation of preaustinoid A4. The aldo-keto reductase ausK, with the help of ausH, is involved in the next step by transforming preaustinoid A4 into isoaustinone which is in turn hydroxylated by the P450 monooxygenase ausI to form austinolide. Finally, the cytochrome P450 monooxygenase ausG modifies austinolide to austinol. Austinol can be further modified to dehydroaustinol which forms a diffusible complex with diorcinol that initiates conidiation. Due to genetic rearrangements of the clusters and the subsequent loss of some enzymes, the end products of the Emericella nidulans austinoid biosynthesis clusters are austinol and dehydroaustinol, even if additional enzymes, such as the O-acetyltransferase ausQ and the cytochrome P450 monooxygenase ausR are still functional. The protein is FAD-dependent monooxygenase ausM of Emericella nidulans (strain FGSC A4 / ATCC 38163 / CBS 112.46 / NRRL 194 / M139) (Aspergillus nidulans).